Consider the following 464-residue polypeptide: UNC93-like protein 3 (464 aa).

The next 11 helical transmembrane spans lie at 31–51 (VHIL…AQNL), 62–82 (ISLG…SLVV), 84–104 (LMGS…FVAA), 110–130 (WFTM…IWVG), 160–180 (EFWA…LALL), 192–212 (TLLM…MFFI), 251–271 (LLIV…WAEF), 275–295 (IVTP…YGAL), 313–333 (ITFI…WLLL), 341–361 (VLGT…DGIL), and 392–412 (IAIV…IVML).

Belongs to the unc-93 family.

It is found in the membrane. In Arabidopsis thaliana (Mouse-ear cress), this protein is UNC93-like protein 3.